Consider the following 412-residue polypeptide: Probable histone-binding protein rba-1 (412 aa).

WD repeat units lie at residues 117–157, 169–209, 219–259, 262–302, 306–346, and 365–405; these read NHPG…SEPK, GHEG…TISG, GHSS…PQLT, GHTA…KKMY, HHND…DPSS, and GHTG…VSSE.

Belongs to the WD repeat RBAP46/RBAP48/MSI1 family. In terms of assembly, binds directly to helix 1 of the histone fold of histone H4, a region that is not accessible when H4 is in chromatin. Interacts with zft-11; the interaction is required to suppress the activation of non-neuronal genes in neurons.

The protein localises to the nucleus. Its function is as follows. Core histone-binding subunit that may target chromatin assembly factors, chromatin remodeling factors and histone deacetylases to their histone substrates in a manner that is regulated by nucleosomal DNA. Plays a role in regulating cell cycle progression. Required to repress the induction of vulval development by Ras signaling. In association with the zinc finger protein ztf-11, negatively regulates the expression of non-neuronal genes during neurogenesis. The chain is Probable histone-binding protein rba-1 from Caenorhabditis elegans.